We begin with the raw amino-acid sequence, 77 residues long: DNA-directed RNA polymerase subunit epsilon (77 aa).

It belongs to the RNA polymerase subunit epsilon family. As to quaternary structure, RNAP is composed of a core of 2 alpha, a beta and a beta' subunit. The core is associated with a delta subunit, and at least one of epsilon or omega. When a sigma factor is associated with the core the holoenzyme is formed, which can initiate transcription.

The enzyme catalyses RNA(n) + a ribonucleoside 5'-triphosphate = RNA(n+1) + diphosphate. A non-essential component of RNA polymerase (RNAP). This chain is DNA-directed RNA polymerase subunit epsilon, found in Streptococcus pneumoniae serotype 19F (strain G54).